The chain runs to 170 residues: Thialysine N-epsilon-acetyltransferase (170 aa).

Residues 4-166 (VMIREAKEGD…FRFEGEAMRE (163 aa)) enclose the N-acetyltransferase domain. 27 to 28 (YE) provides a ligand contact to substrate. Lys29 bears the N6-acetyllysine mark. Substrate is bound at residue Glu92. Acetyl-CoA contacts are provided by residues 94 to 96 (IYV), 102 to 107 (GQGIGS), 133 to 135 (NKR), and Tyr140. Tyr140 serves as the catalytic Proton donor. Substrate is bound at residue Glu152.

Belongs to the acetyltransferase family. Homodimer.

It is found in the cytoplasm. It catalyses the reaction S-(2-aminoethyl)-L-cysteine + acetyl-CoA = S-(2-acetamidoethyl)-L-cysteine + CoA + H(+). The enzyme catalyses an alkane-alpha,omega-diamine + acetyl-CoA = an N-acetylalkane-alpha,omega-diamine + CoA + H(+). In terms of biological role, catalyzes the N-acetylation of the amino acid thialysine (S-(2-aminoethyl)-L-cysteine), a L-lysine analog with the 4-methylene group substituted with a sulfur. May also catalyze acetylation of polyamines, such as norspermidine, spermidine or spermine. However, ability to acetylate polyamines is weak, suggesting that it does not act as a diamine acetyltransferase in vivo. The protein is Thialysine N-epsilon-acetyltransferase of Bos taurus (Bovine).